The sequence spans 111 residues: MIERHMVSTTFDLPGHTVDASLGMVRGIIVRSRSVVGSIGAGLQTIFGGNISLYTSLCERARQDAYERMLADAAMLGANAVIGMRYDATEIGAGVTEVLCYGTAVHARRNV.

It belongs to the UPF0145 family.

This is UPF0145 protein Bphy_3680 from Paraburkholderia phymatum (strain DSM 17167 / CIP 108236 / LMG 21445 / STM815) (Burkholderia phymatum).